Consider the following 306-residue polypeptide: tRNA dimethylallyltransferase (306 aa).

Residue 9–16 (GPTGIGKT) participates in ATP binding. 11–16 (TGIGKT) provides a ligand contact to substrate. An interaction with substrate tRNA region spans residues 34–37 (DSMQ).

The protein belongs to the IPP transferase family. As to quaternary structure, monomer. Requires Mg(2+) as cofactor.

It catalyses the reaction adenosine(37) in tRNA + dimethylallyl diphosphate = N(6)-dimethylallyladenosine(37) in tRNA + diphosphate. Catalyzes the transfer of a dimethylallyl group onto the adenine at position 37 in tRNAs that read codons beginning with uridine, leading to the formation of N6-(dimethylallyl)adenosine (i(6)A). The protein is tRNA dimethylallyltransferase of Lactobacillus johnsonii (strain CNCM I-12250 / La1 / NCC 533).